The following is a 191-amino-acid chain: Ribonuclease M5 (191 aa).

Positions 8-91 (HEFIVVEGRD…AFINRQDALP (84 aa)) constitute a Toprim domain. 3 residues coordinate Mg(2+): Glu14, Asp60, and Asp62.

It belongs to the ribonuclease M5 family. Mg(2+) is required as a cofactor.

It localises to the cytoplasm. It catalyses the reaction Endonucleolytic cleavage of RNA, removing 21 and 42 nucleotides, respectively, from the 5'- and 3'-termini of a 5S-rRNA precursor.. In terms of biological role, required for correct processing of both the 5' and 3' ends of 5S rRNA precursor. Cleaves both sides of a double-stranded region yielding mature 5S rRNA in one step. This Listeria monocytogenes serovar 1/2a (strain ATCC BAA-679 / EGD-e) protein is Ribonuclease M5.